Consider the following 375-residue polypeptide: Trans-enoyl reductase BOA5 (375 aa).

Polar residues predominate over residues 1–16 (MQAVIQTGPGTLQLTE). The interval 1-21 (MQAVIQTGPGTLQLTENVPKP) is disordered. Residue 42–45 (SDWK) participates in NADP(+) binding. 121-128 (VGIVTTGL) contacts substrate. Residues 147-168 (GSAAPQKTRVGPRGWSGGDALT) are disordered. Residues 185-188 (STST), 208-211 (SPHN), Tyr-226, and 273-274 (LD) contribute to the NADP(+) site. Substrate is bound at residue 294 to 298 (ALTIF). An NADP(+)-binding site is contributed by 363 to 364 (VS).

Belongs to the zinc-containing alcohol dehydrogenase family. As to quaternary structure, monomer.

It participates in polyketide biosynthesis. Trans-enoyl reductase; part of the gene cluster A that mediates the biosynthesis of botcinic acid and its botcinin derivatives, acetate-derived polyketides that contribute to virulence when combined with the sesquiterpene botrydial. Botcinic acid and its derivatives have been shown to induce chlorosis and necrosis during host plant infection, but also have antifungal activities. Two polyketide synthases, BOA6 and BOA9, are involved in the biosynthesis of botcinins. BOA6 mediates the formation of the per-methylated tetraketide core by condensation of four units of malonyl-CoA with one unit of acetyl-CoA, which would be methylated in activated methylene groups to yield a bicyclic acid intermediate that could then either be converted to botrylactone derivatives or lose the starter acetate unit through a retro-Claisen type C-C bond cleavage to yield botcinin derivatives. The second polyketide synthase, BOA9, is probably required for the biosynthesis of the tetraketide side chain of botcinins. The methyltransferase (MT) domain within BOA6 is probably responsible for the incorporation of four methyl groups. The trans-enoyl reductase BOA5 might take over the enoyl reductase function of BOA6 that misses an ER domain. The monooxygenases BOA2, BOA3 and BOA4 might be involved in further hydroxylations at C4, C5 and C8, whereas BOA7, close to BOA9, could potentially be involved in the hydroxylation at C4 in the side chain of botcinins. The chain is Trans-enoyl reductase BOA5 from Botryotinia fuckeliana (strain B05.10) (Noble rot fungus).